The following is a 392-amino-acid chain: Acetyl-CoA acetyltransferase (392 aa).

Cys89 serves as the catalytic Acyl-thioester intermediate. Residues His348 and Cys378 each act as proton acceptor in the active site.

This sequence belongs to the thiolase-like superfamily. Thiolase family. In terms of assembly, homotetramer.

The protein localises to the cytoplasm. The catalysed reaction is 2 acetyl-CoA = acetoacetyl-CoA + CoA. It participates in biopolymer metabolism; poly-(R)-3-hydroxybutanoate biosynthesis. It functions in the pathway metabolic intermediate biosynthesis; (R)-mevalonate biosynthesis; (R)-mevalonate from acetyl-CoA: step 1/3. The chain is Acetyl-CoA acetyltransferase from Shinella zoogloeoides (Crabtreella saccharophila).